A 138-amino-acid polypeptide reads, in one-letter code: Histone H2AX (138 aa).

A disordered region spans residues 1–23 (MSTTGKGGKAKGKTASSKQVSRS). N-acetylserine is present on Ser-2. 5 positions are modified to N6-acetyllysine: Lys-6, Lys-9, Lys-11, Lys-13, and Lys-18. At Ser-123 the chain carries Phosphoserine. Lys-124 participates in a covalent cross-link: Glycyl lysine isopeptide (Lys-Gly) (interchain with G-Cter in ubiquitin). 3 positions are modified to phosphoserine: Ser-125, Ser-130, and Ser-135. A [ST]-Q motif motif is present at residues 135-136 (SQ).

It belongs to the histone H2A family. In terms of assembly, the nucleosome is a histone octamer containing two molecules each of H2A, H2B, H3 and H4 assembled in one H3-H4 heterotetramer and two H2A-H2B heterodimers. The octamer wraps approximately 147 bp of DNA. In terms of processing, monoubiquitination of Lys-124 gives a specific tag for epigenetic transcriptional repression. Post-translationally, phosphorylated to form H2AX134ph (gamma-H2AX) in response to DNA double-strand breaks (DSBs) generated by exogenous genotoxic agents in both the mitotic MIC and the amitotic MAC. Gamma-H2AX is also found when programmed DNA rearrangements occur, namely homologous recombination in the MIC during prophase of meiosis, and chromosome fragmentation and DNA elimination in developing MACs. Gamma-H2AX is important to recover from exogenous DNA damage and to repair breaks associated with normal micronuclear meiosis and mitosis and macronuclear amitotic division. Acetylation occurs almost exclusively in the MAC.

It localises to the nucleus. Its subcellular location is the chromosome. In terms of biological role, core component of nucleosome which plays a central role in DNA double strand break (DSB) repair. Nucleosomes wrap and compact DNA into chromatin, limiting DNA accessibility to the cellular machineries which require DNA as a template. Histones thereby play a central role in transcription regulation, DNA repair, DNA replication and chromosomal stability. DNA accessibility is regulated via a complex set of post-translational modifications of histones, also called histone code, and nucleosome remodeling. The protein is Histone H2AX (HTA1) of Tetrahymena thermophila (strain SB210).